A 432-amino-acid chain; its full sequence is Adenylosuccinate synthetase (432 aa).

GTP-binding positions include 11–17 (GDEGKGK) and 39–41 (GHT). Asp-12 functions as the Proton acceptor in the catalytic mechanism. Mg(2+)-binding residues include Asp-12 and Gly-39. Residues 12–15 (DEGK), 37–40 (NAGH), Thr-134, Arg-148, Asn-230, Thr-245, and Arg-309 each bind IMP. The Proton donor role is filled by His-40. 305–311 (VTTGRKR) provides a ligand contact to substrate. GTP is bound by residues Arg-311, 337 to 339 (KLD), and 419 to 421 (GTG).

This sequence belongs to the adenylosuccinate synthetase family. As to quaternary structure, homodimer. The cofactor is Mg(2+).

It localises to the cytoplasm. It catalyses the reaction IMP + L-aspartate + GTP = N(6)-(1,2-dicarboxyethyl)-AMP + GDP + phosphate + 2 H(+). It functions in the pathway purine metabolism; AMP biosynthesis via de novo pathway; AMP from IMP: step 1/2. Plays an important role in the de novo pathway and in the salvage pathway of purine nucleotide biosynthesis. Catalyzes the first committed step in the biosynthesis of AMP from IMP. This chain is Adenylosuccinate synthetase, found in Kluyveromyces lactis (strain ATCC 8585 / CBS 2359 / DSM 70799 / NBRC 1267 / NRRL Y-1140 / WM37) (Yeast).